The sequence spans 156 residues: Small ribosomal subunit protein uS7 (156 aa).

It belongs to the universal ribosomal protein uS7 family. As to quaternary structure, part of the 30S ribosomal subunit. Contacts proteins S9 and S11.

Functionally, one of the primary rRNA binding proteins, it binds directly to 16S rRNA where it nucleates assembly of the head domain of the 30S subunit. Is located at the subunit interface close to the decoding center, probably blocks exit of the E-site tRNA. This is Small ribosomal subunit protein uS7 from Tolumonas auensis (strain DSM 9187 / NBRC 110442 / TA 4).